Here is a 132-residue protein sequence, read N- to C-terminus: Small ribosomal subunit protein uS8c (132 aa).

Belongs to the universal ribosomal protein uS8 family. In terms of assembly, part of the 30S ribosomal subunit.

Its subcellular location is the plastid. It is found in the chloroplast. Its function is as follows. One of the primary rRNA binding proteins, it binds directly to 16S rRNA central domain where it helps coordinate assembly of the platform of the 30S subunit. In Angiopteris evecta (Mule's foot fern), this protein is Small ribosomal subunit protein uS8c (rps8).